Reading from the N-terminus, the 289-residue chain is ATP synthase gamma chain (289 aa).

The protein belongs to the ATPase gamma chain family. F-type ATPases have 2 components, CF(1) - the catalytic core - and CF(0) - the membrane proton channel. CF(1) has five subunits: alpha(3), beta(3), gamma(1), delta(1), epsilon(1). CF(0) has three main subunits: a, b and c.

The protein resides in the cell membrane. Its function is as follows. Produces ATP from ADP in the presence of a proton gradient across the membrane. The gamma chain is believed to be important in regulating ATPase activity and the flow of protons through the CF(0) complex. The sequence is that of ATP synthase gamma chain from Lactococcus lactis subsp. cremoris (strain MG1363).